Consider the following 278-residue polypeptide: Msm operon regulatory protein (278 aa).

An HTH araC/xylS-type domain is found at 176–274 (NQVKKIIHSQ…GKSPSKFRKE (99 aa)). 2 DNA-binding regions (H-T-H motif) span residues 193–214 (NDIAKKLNLSRSYLYKIFRKST) and 241–264 (IAEISNSVGFSDSLAFSKAFKNYF).

Functionally, regulatory protein for the msm operon for multiple sugar metabolism. Activates the transcription of the msmEFGK, aga, dexB and gftA genes. The sequence is that of Msm operon regulatory protein (msmR) from Streptococcus mutans serotype c (strain ATCC 700610 / UA159).